A 107-amino-acid polypeptide reads, in one-letter code: UPF0060 membrane protein mll7841 (107 aa).

Helical transmembrane passes span 4 to 24 (LFYTAAALAEIAGCFSVWAWW), 30 to 50 (PLWLAPGFVSLLLFAWLLALV), 60 to 80 (AAYGGIYIAASLAWLWLVEGV), and 87 to 107 (LAGAALCIAGASLILLAPRGA).

Belongs to the UPF0060 family.

The protein localises to the cell inner membrane. This chain is UPF0060 membrane protein mll7841, found in Mesorhizobium japonicum (strain LMG 29417 / CECT 9101 / MAFF 303099) (Mesorhizobium loti (strain MAFF 303099)).